Reading from the N-terminus, the 475-residue chain is Ribulose bisphosphate carboxylase large chain (475 aa).

A propeptide spanning residues 1 to 2 is cleaved from the precursor; sequence MS. P3 carries the post-translational modification N-acetylproline. Position 14 is an N6,N6,N6-trimethyllysine (K14). N123 and T173 together coordinate substrate. K175 functions as the Proton acceptor in the catalytic mechanism. K177 is a binding site for substrate. Mg(2+) is bound by residues K201, D203, and E204. Residue K201 is modified to N6-carboxylysine. H294 (proton acceptor) is an active-site residue. Residues R295, H327, and S379 each contribute to the substrate site.

It belongs to the RuBisCO large chain family. Type I subfamily. In terms of assembly, heterohexadecamer of 8 large chains and 8 small chains; disulfide-linked. The disulfide link is formed within the large subunit homodimers. The cofactor is Mg(2+). In terms of processing, the disulfide bond which can form in the large chain dimeric partners within the hexadecamer appears to be associated with oxidative stress and protein turnover.

Its subcellular location is the plastid. It is found in the chloroplast. It catalyses the reaction 2 (2R)-3-phosphoglycerate + 2 H(+) = D-ribulose 1,5-bisphosphate + CO2 + H2O. The catalysed reaction is D-ribulose 1,5-bisphosphate + O2 = 2-phosphoglycolate + (2R)-3-phosphoglycerate + 2 H(+). Its function is as follows. RuBisCO catalyzes two reactions: the carboxylation of D-ribulose 1,5-bisphosphate, the primary event in carbon dioxide fixation, as well as the oxidative fragmentation of the pentose substrate in the photorespiration process. Both reactions occur simultaneously and in competition at the same active site. This Afrocarpus gracilior (African fern pine) protein is Ribulose bisphosphate carboxylase large chain.